A 396-amino-acid polypeptide reads, in one-letter code: NADH-quinone oxidoreductase subunit D (396 aa).

This sequence belongs to the complex I 49 kDa subunit family. NDH-1 is composed of 14 different subunits. Subunits NuoB, C, D, E, F, and G constitute the peripheral sector of the complex.

It is found in the cell inner membrane. It carries out the reaction a quinone + NADH + 5 H(+)(in) = a quinol + NAD(+) + 4 H(+)(out). Its function is as follows. NDH-1 shuttles electrons from NADH, via FMN and iron-sulfur (Fe-S) centers, to quinones in the respiratory chain. The immediate electron acceptor for the enzyme in this species is believed to be ubiquinone. Couples the redox reaction to proton translocation (for every two electrons transferred, four hydrogen ions are translocated across the cytoplasmic membrane), and thus conserves the redox energy in a proton gradient. In Methylorubrum extorquens (strain PA1) (Methylobacterium extorquens), this protein is NADH-quinone oxidoreductase subunit D.